The chain runs to 317 residues: Dimethyladenosine transferase (317 aa).

Residues H37, L39, G64, E85, D113, and N128 each coordinate S-adenosyl-L-methionine.

Belongs to the class I-like SAM-binding methyltransferase superfamily. rRNA adenine N(6)-methyltransferase family.

It catalyses the reaction adenosine(1779)/adenosine(1780) in 18S rRNA + 4 S-adenosyl-L-methionine = N(6)-dimethyladenosine(1779)/N(6)-dimethyladenosine(1780) in 18S rRNA + 4 S-adenosyl-L-homocysteine + 4 H(+). In terms of biological role, specifically dimethylates two adjacent adenosines in the loop of a conserved hairpin near the 3'-end of 18S rRNA in the 40S particle. The protein is Dimethyladenosine transferase (DIM1) of Candida glabrata (strain ATCC 2001 / BCRC 20586 / JCM 3761 / NBRC 0622 / NRRL Y-65 / CBS 138) (Yeast).